A 213-amino-acid chain; its full sequence is MSDQSCIIIAIAGASASGKSLIASTIHEELCNELGCEEIGIVTEDSYYKDQTHLSFEERIKTNYDHPNSMDRDLLIQHLCDLKKGKAVDIPVYSYVEHTRTQEVTRFEPKKVIILEGILLLTDERIRQEVNMSVFVDTPLDICFIRRLQRDMEERGRSLQSVIDQYKSTVRPMFLQFIEPSKQYADIVVPRGGKNRVAINMLKVQIQHLLNNK.

ATP is bound at residue 13–20; that stretch reads GASASGKS.

This sequence belongs to the uridine kinase family.

The protein resides in the cytoplasm. The catalysed reaction is uridine + ATP = UMP + ADP + H(+). It catalyses the reaction cytidine + ATP = CMP + ADP + H(+). It participates in pyrimidine metabolism; CTP biosynthesis via salvage pathway; CTP from cytidine: step 1/3. It functions in the pathway pyrimidine metabolism; UMP biosynthesis via salvage pathway; UMP from uridine: step 1/1. The protein is Uridine kinase of Histophilus somni (strain 129Pt) (Haemophilus somnus).